The following is a 423-amino-acid chain: Gamma-glutamyl phosphate reductase (423 aa).

The protein belongs to the gamma-glutamyl phosphate reductase family.

The protein localises to the cytoplasm. It carries out the reaction L-glutamate 5-semialdehyde + phosphate + NADP(+) = L-glutamyl 5-phosphate + NADPH + H(+). It participates in amino-acid biosynthesis; L-proline biosynthesis; L-glutamate 5-semialdehyde from L-glutamate: step 2/2. Functionally, catalyzes the NADPH-dependent reduction of L-glutamate 5-phosphate into L-glutamate 5-semialdehyde and phosphate. The product spontaneously undergoes cyclization to form 1-pyrroline-5-carboxylate. In Pseudomonas putida (strain GB-1), this protein is Gamma-glutamyl phosphate reductase.